We begin with the raw amino-acid sequence, 92 residues long: Protein 10 (92 aa).

Residues 18–29 (FMQKYDKNSDQH) enclose the EF-hand domain.

Belongs to the calbindin family. In terms of tissue distribution, brain.

The polypeptide is Protein 10 (Cavia porcellus (Guinea pig)).